The chain runs to 341 residues: Anthranilate phosphoribosyltransferase (341 aa).

5-phospho-alpha-D-ribose 1-diphosphate is bound by residues G84, 87–88 (GD), T92, 94–97 (NIST), 112–120 (KHGNRSVSS), and S124. Anthranilate is bound at residue G84. Residue S96 coordinates Mg(2+). N115 is an anthranilate binding site. Residue R170 participates in anthranilate binding. Residues D229 and E230 each contribute to the Mg(2+) site.

The protein belongs to the anthranilate phosphoribosyltransferase family. As to quaternary structure, homodimer. Requires Mg(2+) as cofactor.

It catalyses the reaction N-(5-phospho-beta-D-ribosyl)anthranilate + diphosphate = 5-phospho-alpha-D-ribose 1-diphosphate + anthranilate. The protein operates within amino-acid biosynthesis; L-tryptophan biosynthesis; L-tryptophan from chorismate: step 2/5. In terms of biological role, catalyzes the transfer of the phosphoribosyl group of 5-phosphorylribose-1-pyrophosphate (PRPP) to anthranilate to yield N-(5'-phosphoribosyl)-anthranilate (PRA). This Polynucleobacter necessarius subsp. necessarius (strain STIR1) protein is Anthranilate phosphoribosyltransferase.